The chain runs to 1138 residues: Nuclear pore complex-interacting protein family member B4 (1138 aa).

Residues 63-87 (VIIAFPTSYKVVITLWIVYLWVSLL) traverse the membrane as a helical segment. Disordered stretches follow at residues 241–263 (NRMG…SLSL), 291–620 (TPLP…NIKT), and 873–1138 (ERLR…RRLS). A compositionally biased stretch (polar residues) spans 252–262 (QQHSITDNSLS). Positions 349–359 (PLPPSALPSAP) are enriched in pro residues. Basic and acidic residues-rich tracts occupy residues 406 to 416 (DNIKTPAERLR), 448 to 458 (DNIKTPAERLR), 490 to 500 (DNIKTPAERLR), 532 to 542 (DNIKTPAERLR), 574 to 584 (DNIKTPAERLR), 908 to 918 (DNIKTPAERLR), 950 to 960 (DNIKTPAERLR), and 992 to 1002 (DNIKTPAERLR).

The protein belongs to the NPIP family.

Its subcellular location is the membrane. This chain is Nuclear pore complex-interacting protein family member B4 (NPIPB4), found in Homo sapiens (Human).